Here is a 249-residue protein sequence, read N- to C-terminus: FMN reductase [NAD(P)H] (249 aa).

FMN contacts are provided by residues 11-15 (HRSIR), Q67, 134-136 (PIG), and 173-175 (KPR).

It belongs to the flavin oxidoreductase frp family. As to quaternary structure, homodimer.

The catalysed reaction is FMNH2 + NADP(+) = FMN + NADPH + 2 H(+). It catalyses the reaction FMNH2 + NAD(+) = FMN + NADH + 2 H(+). FMN is a competitive inhibitor of NADH, and therefore leads to the preferential utilization of NADPH. Functionally, reduces FMNH(2) to FMN, with NADH or NADPH as reductant. It also reduces nitroaromatic compounds, quinones, chromates and azo dyes. It could supply the reduced form of FMN to luciferase-like protein and contribute to the degradation of aromatic compounds. The polypeptide is FMN reductase [NAD(P)H] (nfrA2) (Bacillus subtilis (strain 168)).